A 1023-amino-acid polypeptide reads, in one-letter code: RTX-I toxin determinant A from serotypes 1/9 (1023 aa).

A run of 3 helical transmembrane segments spans residues 226-256 (NNLP…ILSN), 297-326 (STTA…ADKF), and 367-406 (INSV…SGIL). Hemolysin-type calcium-binding repeat units lie at residues 730–747 (FGSR…DDEI), 748–765 (YGND…NDVI), 766–783 (HGGD…NDRL), 784–801 (IGGK…DDEL), 812–829 (LGGA…TNLF), and 830–847 (DGGV…KDIY).

It belongs to the RTX prokaryotic toxin (TC 1.C.11) family. Palmitoylated by ApxIC. The toxin only becomes active when modified.

The protein resides in the secreted. Its subcellular location is the host cell membrane. In terms of biological role, one of the virulence factors of A.pleuropneumoniae, which has a strong hemolytic activity and is cytotoxic for alveolar macrophages and neutrophils. The polypeptide is RTX-I toxin determinant A from serotypes 1/9 (apxIA) (Actinobacillus pleuropneumoniae (Haemophilus pleuropneumoniae)).